The chain runs to 302 residues: MQDLLNEILDEVRPLLGQGKVADYIPALGGVRPDQLGIAVYGNDGQVFSAGDAETQFSIQSISKVFSLVQAIGHSGEDIWQRLGHEPSGQPFNSLVQLEFERGRPRNPFINAGALVICDINQARFAAPSLSMRDFVRRLCGNRAITSDSKVAESEYQHRSRNAAAAYLMKSFDNFHGDVEDVLRSYFHHCALSMNCIDLAKAFGFLANQGFCTHSGEQILTARQATQVNSIMATSGLYDEAGNFAYRVGLPGKSGVGGGIVAIVPERASVCVWSPELNAAGNSLVGMAALEKLSARIDWSVF.

Residues Ser-61, Asn-111, Glu-155, Asn-162, Tyr-186, Tyr-238, and Val-256 each coordinate substrate.

This sequence belongs to the glutaminase family. In terms of assembly, homotetramer.

It catalyses the reaction L-glutamine + H2O = L-glutamate + NH4(+). The chain is Glutaminase from Pseudomonas savastanoi pv. phaseolicola (strain 1448A / Race 6) (Pseudomonas syringae pv. phaseolicola (strain 1448A / Race 6)).